The primary structure comprises 89 residues: Putative ankyrin repeat protein RF_1157 (89 aa).

An ANK repeat occupies 2–32; it reads YNTTPLNFAINQENNEEVIKYLLANGANPRL.

The protein is Putative ankyrin repeat protein RF_1157 of Rickettsia felis (strain ATCC VR-1525 / URRWXCal2) (Rickettsia azadi).